A 96-amino-acid polypeptide reads, in one-letter code: Large ribosomal subunit protein eL21 (96 aa).

A disordered region spans residues 1–37 (MPSSNGPMTGTRDKLSNSPRERGMSPPQRAIQEYDEG). Over residues 11 to 23 (TRDKLSNSPRERG) the composition is skewed to basic and acidic residues.

Belongs to the eukaryotic ribosomal protein eL21 family.

This is Large ribosomal subunit protein eL21 from Haloquadratum walsbyi (strain DSM 16790 / HBSQ001).